Here is a 347-residue protein sequence, read N- to C-terminus: Lipoyl synthase (347 aa).

[4Fe-4S] cluster contacts are provided by C77, C82, C88, C103, C107, C110, and S317. Residues 89–306 enclose the Radical SAM core domain; it reads FADGTATFMI…MDYGKKIGFF (218 aa).

Belongs to the radical SAM superfamily. Lipoyl synthase family. Requires [4Fe-4S] cluster as cofactor.

The protein localises to the cytoplasm. It catalyses the reaction [[Fe-S] cluster scaffold protein carrying a second [4Fe-4S](2+) cluster] + N(6)-octanoyl-L-lysyl-[protein] + 2 oxidized [2Fe-2S]-[ferredoxin] + 2 S-adenosyl-L-methionine + 4 H(+) = [[Fe-S] cluster scaffold protein] + N(6)-[(R)-dihydrolipoyl]-L-lysyl-[protein] + 4 Fe(3+) + 2 hydrogen sulfide + 2 5'-deoxyadenosine + 2 L-methionine + 2 reduced [2Fe-2S]-[ferredoxin]. The protein operates within protein modification; protein lipoylation via endogenous pathway; protein N(6)-(lipoyl)lysine from octanoyl-[acyl-carrier-protein]: step 2/2. Its function is as follows. Catalyzes the radical-mediated insertion of two sulfur atoms into the C-6 and C-8 positions of the octanoyl moiety bound to the lipoyl domains of lipoate-dependent enzymes, thereby converting the octanoylated domains into lipoylated derivatives. In Psychrobacter arcticus (strain DSM 17307 / VKM B-2377 / 273-4), this protein is Lipoyl synthase.